We begin with the raw amino-acid sequence, 163 residues long: Putative 4-hydroxy-4-methyl-2-oxoglutarate aldolase (163 aa).

Substrate contacts are provided by residues 76-79 (GDML) and Arg-98. Residue Asp-99 participates in a divalent metal cation binding.

This sequence belongs to the class II aldolase/RraA-like family. As to quaternary structure, homotrimer. It depends on a divalent metal cation as a cofactor.

The catalysed reaction is 4-hydroxy-4-methyl-2-oxoglutarate = 2 pyruvate. It catalyses the reaction oxaloacetate + H(+) = pyruvate + CO2. In terms of biological role, catalyzes the aldol cleavage of 4-hydroxy-4-methyl-2-oxoglutarate (HMG) into 2 molecules of pyruvate. Also contains a secondary oxaloacetate (OAA) decarboxylase activity due to the common pyruvate enolate transition state formed following C-C bond cleavage in the retro-aldol and decarboxylation reactions. This chain is Putative 4-hydroxy-4-methyl-2-oxoglutarate aldolase, found in Pseudomonas entomophila (strain L48).